A 461-amino-acid polypeptide reads, in one-letter code: Homocitrate synthase (461 aa).

The 256-residue stretch at 4–259 (VGILDSTLRE…IEVVKLDKLQ (256 aa)) folds into the Pyruvate carboxyltransferase domain. Arginine 12 is a binding site for 2-oxoglutarate. Position 13 (glutamate 13) interacts with Mg(2+). 3 residues coordinate 2-oxoglutarate: histidine 76, arginine 136, and threonine 170. Mg(2+) contacts are provided by histidine 198 and histidine 200. Histidine 292 (proton acceptor) is an active-site residue.

Belongs to the alpha-IPM synthase/homocitrate synthase family. Homocitrate synthase LYS20/LYS21 subfamily. Mg(2+) serves as cofactor. The cofactor is Mn(2+).

The catalysed reaction is acetyl-CoA + 2-oxoglutarate + H2O = (2R)-homocitrate + CoA + H(+). It participates in amino-acid biosynthesis; L-lysine biosynthesis via AAA pathway; L-alpha-aminoadipate from 2-oxoglutarate: step 1/5. Its function is as follows. Catalyzes the aldol-type condensation of 2-oxoglutarate with acetyl-CoA to yield homocitrate. Carries out the first step of the alpha-aminoadipate (AAA) lysine biosynthesis pathway. The chain is Homocitrate synthase from Saccharolobus islandicus (strain Y.N.15.51 / Yellowstone #2) (Sulfolobus islandicus).